Here is a 102-residue protein sequence, read N- to C-terminus: UV-induced protein uvi31 (102 aa).

Belongs to the BolA/IbaG family.

Its subcellular location is the mitochondrion matrix. The protein resides in the cytoplasm. It is found in the nucleus. Its function is as follows. Acts as a mitochondrial iron-sulfur (Fe-S) cluster assembly factor that facilitates [4Fe-4S] cluster insertion into a subset of mitochondrial proteins such as lipoyl synthase (LS) and succinate dehydrogenase (SDH). Required during the last step of iron-sulfur protein assembly when the iron-sulfur cluster is inserted into the target protein. Probably acts together with the monothiol glutaredoxin grx5. Not required for [2Fe-2S] cluster insertion into mitochondrial proteins. May be involved in control of cell division, especially during the resumption from cell cycle arrest. The sequence is that of UV-induced protein uvi31 from Schizosaccharomyces pombe (strain 972 / ATCC 24843) (Fission yeast).